The primary structure comprises 180 residues: NAD(P)H-quinone oxidoreductase subunit I, chloroplastic (180 aa).

4Fe-4S ferredoxin-type domains are found at residues 55-84 (GRIH…VDWR) and 95-124 (LNYS…MTEE). Residues Cys-64, Cys-67, Cys-70, Cys-74, Cys-104, Cys-107, Cys-110, and Cys-114 each coordinate [4Fe-4S] cluster.

Belongs to the complex I 23 kDa subunit family. As to quaternary structure, NDH is composed of at least 16 different subunits, 5 of which are encoded in the nucleus. [4Fe-4S] cluster is required as a cofactor.

Its subcellular location is the plastid. It is found in the chloroplast thylakoid membrane. It catalyses the reaction a plastoquinone + NADH + (n+1) H(+)(in) = a plastoquinol + NAD(+) + n H(+)(out). The enzyme catalyses a plastoquinone + NADPH + (n+1) H(+)(in) = a plastoquinol + NADP(+) + n H(+)(out). Its function is as follows. NDH shuttles electrons from NAD(P)H:plastoquinone, via FMN and iron-sulfur (Fe-S) centers, to quinones in the photosynthetic chain and possibly in a chloroplast respiratory chain. The immediate electron acceptor for the enzyme in this species is believed to be plastoquinone. Couples the redox reaction to proton translocation, and thus conserves the redox energy in a proton gradient. The chain is NAD(P)H-quinone oxidoreductase subunit I, chloroplastic from Illicium oligandrum (Star anise).